Here is a 429-residue protein sequence, read N- to C-terminus: Serine/threonine-protein kinase BGLF4 (429 aa).

A disordered region spans residues 1 to 27 (MDVNMAAELSPTNSSSSGELSVSPEPP). In terms of domain architecture, Protein kinase spans 1 to 409 (MDVNMAAELS…CRPRFEHPHL (409 aa)). The segment covering 14-23 (SSSSGELSVS) has biased composition (low complexity). The tract at residues 36 to 40 (KVTVI) is SUMO interaction motif. ATP-binding positions include 110–118 (LYHELMVCD) and glutamate 128. The active-site Proton acceptor is the aspartate 195. The interval 344–350 (VVLLEVL) is SUMO interaction motif.

This sequence belongs to the protein kinase superfamily. Ser/Thr protein kinase family. As to quaternary structure, interacts with host NUP62 and NUP153; this interaction plays a role in nuclear targeting of BGLF4. Interacts with host SUMO1 and SUMO2.

Its subcellular location is the virion tegument. It localises to the host nucleus. It catalyses the reaction L-seryl-[protein] + ATP = O-phospho-L-seryl-[protein] + ADP + H(+). It carries out the reaction L-threonyl-[protein] + ATP = O-phospho-L-threonyl-[protein] + ADP + H(+). Its function is as follows. Plays many key roles by phosphorylating several proteins including the viral DNA processivity factor BMRF1, EBNA1 or EBNA2. Modifies the host nuclear envelope structure and induces the redistribution of nuclear envelope-associated proteins by phosphorylating host nucleoporins. Subsequently, promotes the nuclear transport of EBV lytic proteins. Required for efficient lytic DNA replication and release of nucleocapsids from the nucleus. Contributes to the compaction of host cell chromatin in cells undergoing lytic replication, presumably by phosphorylating the host condensin complex and host TOP2A. Induces disassembly of the nuclear lamina by phosphorylating with host LMNA. Phosphorylates substrates involved in capsid assembly and DNA packaging. Facilitates the switch from latent to lytic DNA replication by down-regulating EBNA1 replication function. Phosphorylates the viral immediate-early protein BZLF1 and inhibits its sumoylation by interacting with host SUMO1 and SUMO2. Phosphorylates also host SAMHD1 and thereby counteracts its antiviral effect by reducing its dNTP hydrolase activity. This Epstein-Barr virus (strain AG876) (HHV-4) protein is Serine/threonine-protein kinase BGLF4.